The following is a 710-amino-acid chain: Adenylosuccinate synthetase (710 aa).

The segment at 1–54 (MPVRRYGGRYNSSSPGVSNALNPSRTAGWPLSPSPATGSKPASTHHDPVPQEAY) is disordered. The span at 10 to 25 (YNSSSPGVSNALNPSR) shows a compositional bias: polar residues. Over residues 44–54 (THHDPVPQEAY) the composition is skewed to basic and acidic residues. GTP is bound by residues 180–186 (GDEGKGK) and 210–212 (GHT). Asp181 (proton acceptor) is an active-site residue. Asp181 and Gly210 together coordinate Mg(2+). IMP is bound by residues 181–184 (DEGK), 208–211 (NAGH), Thr295, Lys309, Gln421, Thr437, and Lys567. His211 functions as the Proton donor in the catalytic mechanism. 563–569 (AVTKKPR) provides a ligand contact to substrate. GTP-binding positions include Arg569 and 697–699 (GNG).

It belongs to the adenylosuccinate synthetase family. Homodimer. Mg(2+) serves as cofactor.

The protein resides in the cytoplasm. It carries out the reaction IMP + L-aspartate + GTP = N(6)-(1,2-dicarboxyethyl)-AMP + GDP + phosphate + 2 H(+). It participates in purine metabolism; AMP biosynthesis via de novo pathway; AMP from IMP: step 1/2. Functionally, plays an important role in the salvage pathway for purine nucleotide biosynthesis. Catalyzes the first committed step in the biosynthesis of AMP from IMP. This is Adenylosuccinate synthetase from Leishmania major.